A 61-amino-acid chain; its full sequence is Photosystem II reaction center protein K (61 aa).

The propeptide occupies 1 to 24 (MLNIFSLICICLNSVLYSSSFFVA). The chain crosses the membrane as a helical span at residues 40–60 (MPVIPVLFFLLAFVWQAAVSF).

Belongs to the PsbK family. In terms of assembly, PSII is composed of 1 copy each of membrane proteins PsbA, PsbB, PsbC, PsbD, PsbE, PsbF, PsbH, PsbI, PsbJ, PsbK, PsbL, PsbM, PsbT, PsbX, PsbY, PsbZ, Psb30/Ycf12, at least 3 peripheral proteins of the oxygen-evolving complex and a large number of cofactors. It forms dimeric complexes.

Its subcellular location is the plastid. It is found in the chloroplast thylakoid membrane. Functionally, one of the components of the core complex of photosystem II (PSII). PSII is a light-driven water:plastoquinone oxidoreductase that uses light energy to abstract electrons from H(2)O, generating O(2) and a proton gradient subsequently used for ATP formation. It consists of a core antenna complex that captures photons, and an electron transfer chain that converts photonic excitation into a charge separation. In Morus indica (Mulberry), this protein is Photosystem II reaction center protein K.